Consider the following 638-residue polypeptide: 1-deoxy-D-xylulose-5-phosphate synthase (638 aa).

Thiamine diphosphate is bound by residues His-79 and 120–122 (GHS). Asp-151 provides a ligand contact to Mg(2+). Thiamine diphosphate is bound by residues 152 to 153 (GA), Asn-182, Tyr-291, and Glu-373. Asn-182 is a binding site for Mg(2+).

Belongs to the transketolase family. DXPS subfamily. In terms of assembly, homodimer. Mg(2+) serves as cofactor. It depends on thiamine diphosphate as a cofactor.

The catalysed reaction is D-glyceraldehyde 3-phosphate + pyruvate + H(+) = 1-deoxy-D-xylulose 5-phosphate + CO2. It functions in the pathway metabolic intermediate biosynthesis; 1-deoxy-D-xylulose 5-phosphate biosynthesis; 1-deoxy-D-xylulose 5-phosphate from D-glyceraldehyde 3-phosphate and pyruvate: step 1/1. In terms of biological role, catalyzes the acyloin condensation reaction between C atoms 2 and 3 of pyruvate and glyceraldehyde 3-phosphate to yield 1-deoxy-D-xylulose-5-phosphate (DXP). The sequence is that of 1-deoxy-D-xylulose-5-phosphate synthase from Xanthomonas campestris pv. campestris (strain 8004).